We begin with the raw amino-acid sequence, 336 residues long: Pyridoxal 5'-phosphate synthase subunit PdxS (336 aa).

Asp30 is a binding site for D-ribose 5-phosphate. The active-site Schiff-base intermediate with D-ribose 5-phosphate is Lys87. D-ribose 5-phosphate is bound at residue Gly159. D-glyceraldehyde 3-phosphate is bound at residue Arg171. Residues Gly257 and 278–279 contribute to the D-ribose 5-phosphate site; that span reads GS.

The protein belongs to the PdxS/SNZ family. In the presence of PdxT, forms a dodecamer of heterodimers.

It carries out the reaction aldehydo-D-ribose 5-phosphate + D-glyceraldehyde 3-phosphate + L-glutamine = pyridoxal 5'-phosphate + L-glutamate + phosphate + 3 H2O + H(+). It functions in the pathway cofactor biosynthesis; pyridoxal 5'-phosphate biosynthesis. Functionally, catalyzes the formation of pyridoxal 5'-phosphate from ribose 5-phosphate (RBP), glyceraldehyde 3-phosphate (G3P) and ammonia. The ammonia is provided by the PdxT subunit. Can also use ribulose 5-phosphate and dihydroxyacetone phosphate as substrates, resulting from enzyme-catalyzed isomerization of RBP and G3P, respectively. This chain is Pyridoxal 5'-phosphate synthase subunit PdxS, found in Thermoplasma acidophilum (strain ATCC 25905 / DSM 1728 / JCM 9062 / NBRC 15155 / AMRC-C165).